Consider the following 131-residue polypeptide: D-ribose pyranase (131 aa).

The active-site Proton donor is the histidine 20. Substrate is bound by residues aspartate 28, histidine 98, and 120 to 122 (YAN).

The protein belongs to the RbsD / FucU family. RbsD subfamily. Homodecamer.

It is found in the cytoplasm. It carries out the reaction beta-D-ribopyranose = beta-D-ribofuranose. It participates in carbohydrate metabolism; D-ribose degradation; D-ribose 5-phosphate from beta-D-ribopyranose: step 1/2. Functionally, catalyzes the interconversion of beta-pyran and beta-furan forms of D-ribose. This is D-ribose pyranase from Laribacter hongkongensis (strain HLHK9).